We begin with the raw amino-acid sequence, 380 residues long: Ubiquitin-like protein 7 (380 aa).

The region spanning 18–98 (TPKSILRLPE…VLRKSWPEPD (81 aa)) is the Ubiquitin-like domain. The interval 200-313 (APMPGTDSSS…SSGVQSGTPI (114 aa)) is disordered. Residues 206–221 (DSSSRSMPSSSYRDMP) are compositionally biased toward low complexity. S230 is subject to Phosphoserine. 2 stretches are compositionally biased toward low complexity: residues 240-253 (TRSTPSSSTPSSRP) and 270-293 (SELATALALASTPESSSHTPTPGT). Over residues 294 to 313 (QGHSSGTSPMSSGVQSGTPI) the composition is skewed to polar residues. Residues 333–377 (SLQSQWQPQLQQLRDMGIQDDELSLRALQATGGDIQAALELIFAG) form the UBA domain.

In terms of assembly, binds ubiquitin. Interacts with MAVS; this interaction enhances TRIM21-dependent 'Lys-27'-linked polyubiquitination of MAVS. In terms of processing, deubiquitinated by OTUD4 which stabilizes UBL7 expression. Ubiquitous. Highly expressed in heart, skeletal muscle, testis, thyroid and adrenal gland.

In terms of biological role, interferon-stimulated protein that positively regulates RNA virus-triggered innate immune signaling. Mechanistically, promotes 'Lys-27'-linked polyubiquitination of MAVS through TRIM21 leading to enhanced the IFN signaling pathway. The polypeptide is Ubiquitin-like protein 7 (UBL7) (Homo sapiens (Human)).